A 310-amino-acid polypeptide reads, in one-letter code: 4-hydroxyproline epimerase (310 aa).

Cys88 (proton acceptor) is an active-site residue. Substrate contacts are provided by residues 89–90, His208, and Asp232; that span reads GH. The active-site Proton donor is the Cys236. 237–238 contributes to the substrate binding site; it reads GT.

It belongs to the proline racemase family. In terms of assembly, homodimer.

It catalyses the reaction trans-4-hydroxy-L-proline = cis-4-hydroxy-D-proline. Functionally, allows intracellular utilization of 4-hydroxyproline, one of the major constituents of host collagen, by converting 4-hydroxy-L-proline to 4-hydroxy-D-proline, which can be further metabolized by intracellular 4-hydroxy-D-proline oxidases. This Burkholderia cenocepacia (strain HI2424) protein is 4-hydroxyproline epimerase.